A 157-amino-acid chain; its full sequence is MPRRREVPKREILPDPKFGNVELSKFMNVIMESGKKAVAERIIYGALELIEKKHPDKDPLEAFTVAINNVKPMVEVKSRRVGGANYQVPVEVRPVRRLALSMRWIKEAARKRGEKSMAQRLANELLEATEGRGGAMKKRDEVHRMAEANKAFSHFRF.

The protein belongs to the universal ribosomal protein uS7 family. Part of the 30S ribosomal subunit. Contacts proteins S9 and S11.

One of the primary rRNA binding proteins, it binds directly to 16S rRNA where it nucleates assembly of the head domain of the 30S subunit. Is located at the subunit interface close to the decoding center, probably blocks exit of the E-site tRNA. The chain is Small ribosomal subunit protein uS7 from Verminephrobacter eiseniae (strain EF01-2).